Reading from the N-terminus, the 303-residue chain is UDP-N-acetylenolpyruvoylglucosamine reductase (303 aa).

One can recognise an FAD-binding PCMH-type domain in the interval 30-196 (IGGPADLLII…LEAVFKLKQD (167 aa)). Arginine 174 is an active-site residue. Serine 225 serves as the catalytic Proton donor. Glutamate 295 is a catalytic residue.

It belongs to the MurB family. FAD serves as cofactor.

It is found in the cytoplasm. The catalysed reaction is UDP-N-acetyl-alpha-D-muramate + NADP(+) = UDP-N-acetyl-3-O-(1-carboxyvinyl)-alpha-D-glucosamine + NADPH + H(+). The protein operates within cell wall biogenesis; peptidoglycan biosynthesis. Functionally, cell wall formation. The polypeptide is UDP-N-acetylenolpyruvoylglucosamine reductase (Bacillus pumilus (strain SAFR-032)).